The following is a 438-amino-acid chain: Enolase (438 aa).

Substrate contacts are provided by His159 and Glu168. The Proton donor role is filled by Glu211. Mg(2+)-binding residues include Asp246, Glu297, and Asp322. Residues Glu297 and Asp322 each contribute to the substrate site. Catalysis depends on Lys347, which acts as the Proton acceptor. Substrate is bound by residues 374–377 (SHRS) and Lys398.

Belongs to the enolase family. As to quaternary structure, homodimer. Mg(2+) serves as cofactor.

The protein localises to the cytoplasm. It carries out the reaction (2R)-2-phosphoglycerate = phosphoenolpyruvate + H2O. It functions in the pathway carbohydrate degradation; glycolysis; pyruvate from D-glyceraldehyde 3-phosphate: step 4/5. The polypeptide is Enolase (enoA) (Penicillium chrysogenum (Penicillium notatum)).